A 518-amino-acid polypeptide reads, in one-letter code: MVHVRRHETRKNSKTQKPEQKSRVDWHRTKRSISQLFDSDEELDSNEELDSDEEHDSGESIDSDEELDISKKSDINELPEKETELKLIKVESQGSNSKHLTNTSNSSADEEQLKETKHNDLPDDEAHPGQAENHHNRHTGQILEEDMEDEYIKPGKRKRLSSVMYDSDESDDSDILIRKASAKHPRRVVEDECSSLEMEQETPEKSSAARKREYHQKLQELSERSRQRRRRNSGRNFEDSEKDSCSGTGEEDEDEDEDDYRYDEDGDDYMIDDFVVRNEEGDDENSNQQGENLTTSQLKLVKQNSLYSFSDHYTHFERVVKALLINAFDESFLETLYAGTRKKSYAKDMLTSLHYLDNRFIQPRLESLVSRSRWKEQYKERVESYSNLNILSKSPENCVCQACGLHRHCKFSVHLSGKLYNIRTMETDDFMSHDKQVFTVGRICVERTRIYHKLKHFKFKLYQDCCLIAKPEEVGDEQVKDTVKRVFNHSKERGWIRKKYDQLQNFLNSADYFQDEKF.

Positions 1–14 (MVHVRRHETRKNSK) are enriched in basic residues. The tract at residues 1–266 (MVHVRRHETR…EDDYRYDEDG (266 aa)) is disordered. Residues 16–27 (QKPEQKSRVDWH) show a composition bias toward basic and acidic residues. Acidic residues predominate over residues 38-67 (DSDEELDSNEELDSDEEHDSGESIDSDEEL). Over residues 68 to 89 (DISKKSDINELPEKETELKLIK) the composition is skewed to basic and acidic residues. Over residues 92 to 107 (SQGSNSKHLTNTSNSS) the composition is skewed to polar residues. A compositionally biased stretch (basic and acidic residues) spans 111 to 127 (EQLKETKHNDLPDDEAH). Phosphoserine occurs at positions 170 and 194. The segment covering 191–201 (DECSSLEMEQE) has biased composition (acidic residues). Residue Thr202 is modified to Phosphothreonine. Residues 204–232 (EKSSAARKREYHQKLQELSERSRQRRRRN) adopt a coiled-coil conformation. Residues 215–225 (HQKLQELSERS) are compositionally biased toward basic and acidic residues. The span at 249-266 (GEEDEDEDEDDYRYDEDG) shows a compositional bias: acidic residues. At Ser305 the chain carries Phosphoserine.

In Mus musculus (Mouse), this protein is Coiled-coil domain-containing protein 82 (Ccdc82).